Consider the following 509-residue polypeptide: Putative ATP-dependent RNA helicase QP509L (509 aa).

The 153-residue stretch at 110–262 (KKLLSPYGRF…KIILHHLGQP (153 aa)) folds into the Helicase ATP-binding domain. 123-130 (LNTGLGKT) lines the ATP pocket. Residues 215–218 (DEAH) carry the DEAH box motif.

The protein belongs to the DEAD box helicase family. DEAH subfamily.

The enzyme catalyses ATP + H2O = ADP + phosphate + H(+). This chain is Putative ATP-dependent RNA helicase QP509L, found in Ornithodoros (relapsing fever ticks).